The sequence spans 295 residues: Small ribosomal subunit biogenesis GTPase RsgA (295 aa).

In terms of domain architecture, CP-type G spans 68 to 228 (KNLLTKPHVA…VVDTPGFANL (161 aa)). GTP-binding positions include 117 to 120 (NKMD) and 170 to 178 (GLSGVGKSS). Positions 250, 255, 257, and 263 each coordinate Zn(2+).

It belongs to the TRAFAC class YlqF/YawG GTPase family. RsgA subfamily. As to quaternary structure, monomer. Associates with 30S ribosomal subunit, binds 16S rRNA. Zn(2+) serves as cofactor.

Its subcellular location is the cytoplasm. Functionally, one of several proteins that assist in the late maturation steps of the functional core of the 30S ribosomal subunit. Helps release RbfA from mature subunits. May play a role in the assembly of ribosomal proteins into the subunit. Circularly permuted GTPase that catalyzes slow GTP hydrolysis, GTPase activity is stimulated by the 30S ribosomal subunit. The chain is Small ribosomal subunit biogenesis GTPase RsgA from Thermotoga petrophila (strain ATCC BAA-488 / DSM 13995 / JCM 10881 / RKU-1).